We begin with the raw amino-acid sequence, 177 residues long: Chorismate pyruvate-lyase (177 aa).

Residues methionine 36, arginine 78, leucine 116, and glutamate 157 each contribute to the substrate site.

It belongs to the UbiC family. As to quaternary structure, monomer.

The protein resides in the cytoplasm. It catalyses the reaction chorismate = 4-hydroxybenzoate + pyruvate. Its pathway is cofactor biosynthesis; ubiquinone biosynthesis. Removes the pyruvyl group from chorismate, with concomitant aromatization of the ring, to provide 4-hydroxybenzoate (4HB) for the ubiquinone pathway. This is Chorismate pyruvate-lyase from Pectobacterium atrosepticum (strain SCRI 1043 / ATCC BAA-672) (Erwinia carotovora subsp. atroseptica).